A 270-amino-acid polypeptide reads, in one-letter code: Imidazole glycerol phosphate synthase subunit HisF (270 aa).

Residues D11 and D135 contribute to the active site.

Belongs to the HisA/HisF family. In terms of assembly, heterodimer of HisH and HisF.

The protein resides in the cytoplasm. It catalyses the reaction 5-[(5-phospho-1-deoxy-D-ribulos-1-ylimino)methylamino]-1-(5-phospho-beta-D-ribosyl)imidazole-4-carboxamide + L-glutamine = D-erythro-1-(imidazol-4-yl)glycerol 3-phosphate + 5-amino-1-(5-phospho-beta-D-ribosyl)imidazole-4-carboxamide + L-glutamate + H(+). It functions in the pathway amino-acid biosynthesis; L-histidine biosynthesis; L-histidine from 5-phospho-alpha-D-ribose 1-diphosphate: step 5/9. Functionally, IGPS catalyzes the conversion of PRFAR and glutamine to IGP, AICAR and glutamate. The HisF subunit catalyzes the cyclization activity that produces IGP and AICAR from PRFAR using the ammonia provided by the HisH subunit. This chain is Imidazole glycerol phosphate synthase subunit HisF, found in Haloquadratum walsbyi (strain DSM 16790 / HBSQ001).